Here is an 86-residue protein sequence, read N- to C-terminus: Exodeoxyribonuclease 7 small subunit (86 aa).

Residues 67 to 86 are disordered; the sequence is RVSPASGGATEAPAPAERDR.

It belongs to the XseB family. Heterooligomer composed of large and small subunits.

It localises to the cytoplasm. It catalyses the reaction Exonucleolytic cleavage in either 5'- to 3'- or 3'- to 5'-direction to yield nucleoside 5'-phosphates.. Bidirectionally degrades single-stranded DNA into large acid-insoluble oligonucleotides, which are then degraded further into small acid-soluble oligonucleotides. In Beutenbergia cavernae (strain ATCC BAA-8 / DSM 12333 / CCUG 43141 / JCM 11478 / NBRC 16432 / NCIMB 13614 / HKI 0122), this protein is Exodeoxyribonuclease 7 small subunit.